We begin with the raw amino-acid sequence, 218 residues long: Epoxyqueuosine reductase QueH (218 aa).

Positions 22, 23, 101, and 104 each coordinate [4Fe-4S] cluster. C184 and C186 are joined by a disulfide.

Belongs to the QueH family.

It catalyses the reaction epoxyqueuosine(34) in tRNA + AH2 = queuosine(34) in tRNA + A + H2O. It functions in the pathway tRNA modification; tRNA-queuosine biosynthesis. Its function is as follows. Catalyzes the conversion of epoxyqueuosine (oQ) to queuosine (Q), which is a hypermodified base found in the wobble positions of tRNA(Asp), tRNA(Asn), tRNA(His) and tRNA(Tyr). This chain is Epoxyqueuosine reductase QueH, found in Acinetobacter baylyi (strain ATCC 33305 / BD413 / ADP1).